The following is a 418-amino-acid chain: Voltage-gated ClC-type chloride channel ClcB (418 aa).

A run of 10 helical transmembrane segments spans residues 5–25 (LLIATVVGILAAFAVAGFRHA), 54–74 (LLTPALGGLAAGLLLMGWQKF), 146–166 (LWIACGAAAGMAAAYRAPLAG), 168–188 (LFIAEVLFGTMMLASLGPVII), 222–242 (ALIISTGVLAGLCGPLLLTLM), 258–278 (WQLALGGLIVGLLSLFTPAVW), 291–311 (APPLLMIIAGIFLCKLCAVLA), 316–336 (GAPGGVFTPTLFIGLAIGMLY), 352–372 (LLLGLTGMATLLAATTHAPIM), and 380–400 (MTGEYQLLPGLLIACVIASVI).

The protein belongs to the chloride channel (TC 2.A.49) family. ClcB subfamily.

The protein localises to the cell inner membrane. Its function is as follows. Probably acts as an electrical shunt for an outwardly-directed proton pump that is linked to amino acid decarboxylation, as part of the extreme acid resistance (XAR) response. The protein is Voltage-gated ClC-type chloride channel ClcB of Escherichia coli O127:H6 (strain E2348/69 / EPEC).